We begin with the raw amino-acid sequence, 92 residues long: Small ribosomal subunit protein uS15 (92 aa).

Belongs to the universal ribosomal protein uS15 family. As to quaternary structure, part of the 30S ribosomal subunit. Forms a bridge to the 50S subunit in the 70S ribosome, contacting the 23S rRNA.

Its function is as follows. One of the primary rRNA binding proteins, it binds directly to 16S rRNA where it helps nucleate assembly of the platform of the 30S subunit by binding and bridging several RNA helices of the 16S rRNA. Functionally, forms an intersubunit bridge (bridge B4) with the 23S rRNA of the 50S subunit in the ribosome. This Symbiobacterium thermophilum (strain DSM 24528 / JCM 14929 / IAM 14863 / T) protein is Small ribosomal subunit protein uS15.